Reading from the N-terminus, the 322-residue chain is Acetyl-coenzyme A carboxylase carboxyl transferase subunit alpha (322 aa).

The CoA carboxyltransferase C-terminal domain occupies 30-293; it reads AVDISAEILR…KKALQDSLKL (264 aa).

This sequence belongs to the AccA family. In terms of assembly, acetyl-CoA carboxylase is a heterohexamer composed of biotin carboxyl carrier protein (AccB), biotin carboxylase (AccC) and two subunits each of ACCase subunit alpha (AccA) and ACCase subunit beta (AccD).

It localises to the cytoplasm. The catalysed reaction is N(6)-carboxybiotinyl-L-lysyl-[protein] + acetyl-CoA = N(6)-biotinyl-L-lysyl-[protein] + malonyl-CoA. The protein operates within lipid metabolism; malonyl-CoA biosynthesis; malonyl-CoA from acetyl-CoA: step 1/1. Functionally, component of the acetyl coenzyme A carboxylase (ACC) complex. First, biotin carboxylase catalyzes the carboxylation of biotin on its carrier protein (BCCP) and then the CO(2) group is transferred by the carboxyltransferase to acetyl-CoA to form malonyl-CoA. The protein is Acetyl-coenzyme A carboxylase carboxyl transferase subunit alpha of Nitrosospira multiformis (strain ATCC 25196 / NCIMB 11849 / C 71).